Here is a 235-residue protein sequence, read N- to C-terminus: Large ribosomal subunit protein uL1 (235 aa).

It belongs to the universal ribosomal protein uL1 family. Part of the 50S ribosomal subunit.

In terms of biological role, binds directly to 23S rRNA. The L1 stalk is quite mobile in the ribosome, and is involved in E site tRNA release. Its function is as follows. Protein L1 is also a translational repressor protein, it controls the translation of the L11 operon by binding to its mRNA. The chain is Large ribosomal subunit protein uL1 from Mycobacterium sp. (strain JLS).